A 215-amino-acid polypeptide reads, in one-letter code: Nucleoside triphosphate pyrophosphatase (215 aa).

This sequence belongs to the Maf family. The cofactor is a divalent metal cation.

The protein localises to the cytoplasm. It carries out the reaction a ribonucleoside 5'-triphosphate + H2O = a ribonucleoside 5'-phosphate + diphosphate + H(+). It catalyses the reaction a 2'-deoxyribonucleoside 5'-triphosphate + H2O = a 2'-deoxyribonucleoside 5'-phosphate + diphosphate + H(+). Nucleoside triphosphate pyrophosphatase. May have a dual role in cell division arrest and in preventing the incorporation of modified nucleotides into cellular nucleic acids. The polypeptide is Nucleoside triphosphate pyrophosphatase (Rickettsia conorii (strain ATCC VR-613 / Malish 7)).